The sequence spans 469 residues: Aspartyl/glutamyl-tRNA(Asn/Gln) amidotransferase subunit B (469 aa).

The protein belongs to the GatB/GatE family. GatB subfamily. As to quaternary structure, heterotrimer of A, B and C subunits.

It carries out the reaction L-glutamyl-tRNA(Gln) + L-glutamine + ATP + H2O = L-glutaminyl-tRNA(Gln) + L-glutamate + ADP + phosphate + H(+). It catalyses the reaction L-aspartyl-tRNA(Asn) + L-glutamine + ATP + H2O = L-asparaginyl-tRNA(Asn) + L-glutamate + ADP + phosphate + 2 H(+). Its function is as follows. Allows the formation of correctly charged Asn-tRNA(Asn) or Gln-tRNA(Gln) through the transamidation of misacylated Asp-tRNA(Asn) or Glu-tRNA(Gln) in organisms which lack either or both of asparaginyl-tRNA or glutaminyl-tRNA synthetases. The reaction takes place in the presence of glutamine and ATP through an activated phospho-Asp-tRNA(Asn) or phospho-Glu-tRNA(Gln). This is Aspartyl/glutamyl-tRNA(Asn/Gln) amidotransferase subunit B from Methanococcus maripaludis (strain C7 / ATCC BAA-1331).